A 280-amino-acid chain; its full sequence is MHFTKAHGLGNDFILVDCFKEKVNPEDFPGLAVKMCDRHFGVGADGLVLLLPSPSADVSMRIFNPDGSEAEMCGNAIRCVAKYLYERGMVKADRIRVETLAGVMIPELLVEEGRVRLVRVDMGEPRLERSEIPMEGPPGRVLGEPLETGGAVYRITAVSMGNPHCVIFVQDLDAVPFQTAGPLIETHPAFPRRTNVEFIQVLTPEEIKMRVWERGAGETMACGTGACAAVVAGVLNGYTGRRVTVHLKAGDLFIEWPEGKHVYMSGPAEEVFSGEYPYRT.

Residues asparagine 11 and asparagine 64 each contribute to the substrate site. The active-site Proton donor is cysteine 73. Substrate contacts are provided by residues 74 to 75 (GN), asparagine 162, asparagine 195, and 213 to 214 (ER). The active-site Proton acceptor is the cysteine 222. Residue 223–224 (GT) participates in substrate binding.

The protein belongs to the diaminopimelate epimerase family. In terms of assembly, homodimer.

The protein resides in the cytoplasm. The catalysed reaction is (2S,6S)-2,6-diaminopimelate = meso-2,6-diaminopimelate. It participates in amino-acid biosynthesis; L-lysine biosynthesis via DAP pathway; DL-2,6-diaminopimelate from LL-2,6-diaminopimelate: step 1/1. Functionally, catalyzes the stereoinversion of LL-2,6-diaminopimelate (L,L-DAP) to meso-diaminopimelate (meso-DAP), a precursor of L-lysine and an essential component of the bacterial peptidoglycan. This is Diaminopimelate epimerase from Pelotomaculum thermopropionicum (strain DSM 13744 / JCM 10971 / SI).